Reading from the N-terminus, the 302-residue chain is Phosphoribosylaminoimidazole-succinocarboxamide synthase (302 aa).

The protein belongs to the SAICAR synthetase family.

The enzyme catalyses 5-amino-1-(5-phospho-D-ribosyl)imidazole-4-carboxylate + L-aspartate + ATP = (2S)-2-[5-amino-1-(5-phospho-beta-D-ribosyl)imidazole-4-carboxamido]succinate + ADP + phosphate + 2 H(+). Its pathway is purine metabolism; IMP biosynthesis via de novo pathway; 5-amino-1-(5-phospho-D-ribosyl)imidazole-4-carboxamide from 5-amino-1-(5-phospho-D-ribosyl)imidazole-4-carboxylate: step 1/2. This is Phosphoribosylaminoimidazole-succinocarboxamide synthase from Leptothrix cholodnii (strain ATCC 51168 / LMG 8142 / SP-6) (Leptothrix discophora (strain SP-6)).